The primary structure comprises 47 residues: Photosystem II reaction center protein K (47 aa).

A propeptide spanning residues 1–10 (MASFTLDLLA) is cleaved from the precursor. A helical transmembrane segment spans residues 19–39 (FSPLIDILPLIPVFFLLLAFV).

This sequence belongs to the PsbK family. As to quaternary structure, PSII is composed of 1 copy each of membrane proteins PsbA, PsbB, PsbC, PsbD, PsbE, PsbF, PsbH, PsbI, PsbJ, PsbK, PsbL, PsbM, PsbT, PsbX, PsbY, PsbZ, Psb30/Ycf12, peripheral proteins PsbO, CyanoQ (PsbQ), PsbU, PsbV and a large number of cofactors. It forms dimeric complexes.

The protein resides in the cellular thylakoid membrane. Its function is as follows. One of the components of the core complex of photosystem II (PSII). PSII is a light-driven water:plastoquinone oxidoreductase that uses light energy to abstract electrons from H(2)O, generating O(2) and a proton gradient subsequently used for ATP formation. It consists of a core antenna complex that captures photons, and an electron transfer chain that converts photonic excitation into a charge separation. This chain is Photosystem II reaction center protein K, found in Parasynechococcus marenigrum (strain WH8102).